The primary structure comprises 613 residues: ATP-dependent RNA helicase DeaD (613 aa).

The Q motif signature appears at 5–33; that stretch reads ITFNDLGLPEFILKAVSDLGFETPSPIQQ. The 172-residue stretch at 36–207 folds into the Helicase ATP-binding domain; it reads IPHLLNGNDV…KRFMNDPQEV (172 aa). 49-56 provides a ligand contact to ATP; the sequence is AQTGSGKT. The short motif at 155-158 is the DEAD box element; that stretch reads DEAD. The Helicase C-terminal domain occupies 231–378; it reads KNEALLRFLE…EVELPNHLVL (148 aa). Disordered stretches follow at residues 434–476 and 552–613; these read ILPP…PQPM and AVKS…RSSF. Basic and acidic residues-rich tracts occupy residues 440 to 469 and 556 to 613; these read PMEKRRRERNDRGDRRENPRSAERRGERKG and DNSR…RSSF.

Belongs to the DEAD box helicase family. DeaD/CsdA subfamily.

Its subcellular location is the cytoplasm. The catalysed reaction is ATP + H2O = ADP + phosphate + H(+). Functionally, DEAD-box RNA helicase involved in various cellular processes at low temperature, including ribosome biogenesis, mRNA degradation and translation initiation. In Haemophilus influenzae (strain ATCC 51907 / DSM 11121 / KW20 / Rd), this protein is ATP-dependent RNA helicase DeaD.